The chain runs to 593 residues: Potassium channel KAT6 (593 aa).

Topologically, residues 1–33 (MAASRSELLRPAFGEPSPSLGPFVVNPHTCSYR) are cytoplasmic. The helical transmembrane segment at 34–54 (WWQKFLIVLVLYTAWASPFEL) threads the bilayer. The Extracellular portion of the chain corresponds to 55–64 (AMEKSASAAL). Residues 65–85 (AVTELVVDAFFAVDIAVSFFV) form a helical membrane-spanning segment. At 86–106 (AYRDASTGLLVTDRKKIATRH) the chain is on the cytoplasmic side. A helical membrane pass occupies residues 107–129 (LARPCLALDVASTIPLQMIYRIV). The Extracellular segment spans residues 130 to 138 (SGKRQALYG). Residues 139–159 (LLNLLRLWRLRRVSKLFARLE) form a helical; Voltage-sensor membrane-spanning segment. Residues 160–173 (KDIRFSYLWTRLIK) lie on the Cytoplasmic side of the membrane. A helical transmembrane segment spans residues 174–194 (LLYVTLFAVHFASCIYLWMAF). Residues 195–221 (HHKAKELTWIGSQFHGFEDRSVWFCYT) lie on the Extracellular side of the membrane. Positions 222-241 (CAVYWSITTLATVGYGDLHA) form an intramembrane region, pore-forming. The Extracellular portion of the chain corresponds to 242-247 (ANTGEM). The helical transmembrane segment at 248 to 268 (LFSIAFMLFNMGLTSYIIGNI) threads the bilayer. Residues 269–593 (TNLVVHETTN…RDGDHLFFSW (325 aa)) lie on the Cytoplasmic side of the membrane. A nucleoside 3',5'-cyclic phosphate is bound at residue 350–470 (LFQGVSDKLV…VVVFSNFVLY (121 aa)). Residues 522-593 (RVSIHEHLLN…RDGDHLFFSW (72 aa)) form the KHA domain.

This sequence belongs to the potassium channel family. Plant (TC 1.A.1.4) subfamily.

Its subcellular location is the membrane. Functionally, probable inward-rectifying potassium channel. Assuming opened or closed conformations in response to the voltage difference across the membrane, the channel is activated by hyperpolarization. The polypeptide is Potassium channel KAT6 (Oryza sativa subsp. japonica (Rice)).